Here is a 425-residue protein sequence, read N- to C-terminus: Ribulose bisphosphate carboxylase (425 aa).

The active-site Proton acceptor is lysine 153. Substrate is bound at residue lysine 155. 3 residues coordinate Mg(2+): lysine 179, aspartate 181, and glutamate 182. Lysine 179 is subject to N6-carboxylysine. Catalysis depends on histidine 269, which acts as the Proton acceptor. Substrate-binding positions include arginine 270, histidine 302, 353–355 (SGG), and 375–378 (QAGG).

The protein belongs to the RuBisCO large chain family. Type III subfamily. In terms of assembly, homodimer. In contrast to form I RuBisCO, the form III RuBisCO is composed solely of large subunits. It depends on Mg(2+) as a cofactor.

The enzyme catalyses 2 (2R)-3-phosphoglycerate + 2 H(+) = D-ribulose 1,5-bisphosphate + CO2 + H2O. The catalysed reaction is D-ribulose 1,5-bisphosphate + O2 = 2-phosphoglycolate + (2R)-3-phosphoglycerate + 2 H(+). Reversibly inhibited by O(2). Its function is as follows. Catalyzes the addition of molecular CO(2) and H(2)O to ribulose 1,5-bisphosphate (RuBP), generating two molecules of 3-phosphoglycerate (3-PGA). Functions in an archaeal AMP degradation pathway, together with AMP phosphorylase and R15P isomerase. The polypeptide is Ribulose bisphosphate carboxylase (Methanocaldococcus jannaschii (strain ATCC 43067 / DSM 2661 / JAL-1 / JCM 10045 / NBRC 100440) (Methanococcus jannaschii)).